Consider the following 163-residue polypeptide: Phosphopantetheine adenylyltransferase (163 aa).

Substrate is bound at residue Thr-9. Residues 9-10 (TF) and His-17 each bind ATP. Substrate-binding residues include Lys-41, Leu-76, and Arg-90. ATP-binding positions include 91–93 (GLR), Glu-101, and 126–132 (YSFISST).

This sequence belongs to the bacterial CoaD family. Homohexamer. Mg(2+) is required as a cofactor.

The protein resides in the cytoplasm. It carries out the reaction (R)-4'-phosphopantetheine + ATP + H(+) = 3'-dephospho-CoA + diphosphate. The protein operates within cofactor biosynthesis; coenzyme A biosynthesis; CoA from (R)-pantothenate: step 4/5. Its function is as follows. Reversibly transfers an adenylyl group from ATP to 4'-phosphopantetheine, yielding dephospho-CoA (dPCoA) and pyrophosphate. The polypeptide is Phosphopantetheine adenylyltransferase (Dichelobacter nodosus (strain VCS1703A)).